The chain runs to 678 residues: MATASLDALQAAYVDFSEITLREKVGHGSYGVVCKAVWRDKLVAVKEFFASAEQKDIEKEVKQLSRVKHPNIIALHGISSYQQATYLIMEFAEGGSLHNFLHGKVKPAYSLAHAMSWARQCAEGLAYLHAMTPKPLIHRDVKPLNLLLTNKGRNLKICDFGTVADKSTMMTNNRGSAAWMAPEVFEGSKYTEKCDIFSWAIVLWEVLSRKQPFKGIDNAYTIQWKIYKGERPPLLTTCPKRIEDLMTACWKTVPEDRPSMQYIVGVMHEIVKDYTGADKALEYTFVNQQIVTKESDGTVAAQPDSLSSQEGELSPSSTQLTPTTAANANVNAIAISKTTTSSMTENTSSTSSDITPTNSGQLDNNPLFYMVTNRWDAIPEEESNESRNDSFNLTSSAEATQRLETIRNGMILMACKPMEQLTLDVEANGFDLSPSESSSSSTNAKSDGRERLTVTDTKPVMMTTDLSNNNGGIHAHSNGLLSHANGWQARDEELQEQEHEQEIVNSLDVDVDPDEDENDGTEQSLAEILDPELQPEPPIPNDAESQLIYRDHRHMAKEYLSVDTNLYYAQDFKDKLIVQMDRTEREQKQELLRKMKDKEGLQSLYNNLQQQYASRQLAAGHHPQPHPHPHPNQLQHPHSHPPMHFLQDEGCGLLPGSVCGGSESVEEGWVVIPPHHNA.

One can recognise a Protein kinase domain in the interval 19-271 (ITLREKVGHG…YIVGVMHEIV (253 aa)). ATP is bound by residues 25 to 33 (VGHGSYGVV) and Lys-46. Asp-140 functions as the Proton acceptor in the catalytic mechanism. 4 disordered regions span residues 296–322 (DGTV…QLTP), 339–365 (TTSS…LDNN), 431–455 (DLSP…LTVT), and 616–647 (QLAA…HFLQ). Composition is skewed to low complexity over residues 313 to 322 (LSPSSTQLTP) and 339 to 352 (TTSS…STSS). Polar residues predominate over residues 353–364 (DITPTNSGQLDN).

It belongs to the protein kinase superfamily. STE Ser/Thr protein kinase family. MAP kinase kinase kinase subfamily. The cofactor is Mg(2+).

It catalyses the reaction L-seryl-[protein] + ATP = O-phospho-L-seryl-[protein] + ADP + H(+). The catalysed reaction is L-threonyl-[protein] + ATP = O-phospho-L-threonyl-[protein] + ADP + H(+). Functionally, component of a protein kinase signal transduction cascade. Mediator of TGF-beta signal transduction. Responsible for activation of the JNK MAPK pathway (basket, bsk and hemipterous, hep) in response to LPS. Component of the NF-kappa-B pathway; relish-mediated JNK inhibition involves proteasomal degradation of Tak1; certain targets of Relish that are induced during immune responses may facilitate destruction of Tak1 and switch off the JNK cascade. Participates in diverse roles such as control of cell shape and regulation of apoptosis. This is Mitogen-activated protein kinase kinase kinase 7 (Tak1) from Drosophila melanogaster (Fruit fly).